A 332-amino-acid chain; its full sequence is Geranylgeranyl diphosphate synthase (332 aa).

Residues lysine 45, arginine 48, and histidine 77 each coordinate isopentenyl diphosphate. 2 residues coordinate Mg(2+): aspartate 84 and aspartate 88. An all-trans-polyprenyl diphosphate is bound at residue arginine 93. Arginine 94 contacts isopentenyl diphosphate. Positions 177, 178, 215, 232, and 242 each coordinate an all-trans-polyprenyl diphosphate.

This sequence belongs to the FPP/GGPP synthase family. Mg(2+) serves as cofactor.

The catalysed reaction is isopentenyl diphosphate + (2E,6E)-farnesyl diphosphate = (2E,6E,10E)-geranylgeranyl diphosphate + diphosphate. It functions in the pathway isoprenoid biosynthesis; geranylgeranyl diphosphate biosynthesis; geranylgeranyl diphosphate from farnesyl diphosphate and isopentenyl diphosphate: step 1/1. Catalyzes the condensation of isopentenyl pyrophosphate with the allylic pyrophosphates to yield geranylgeranyl diphosphate (GGPP) which is a precursor of the ether-linked lipids. The protein is Geranylgeranyl diphosphate synthase (gds) of Saccharolobus solfataricus (strain ATCC 35092 / DSM 1617 / JCM 11322 / P2) (Sulfolobus solfataricus).